The following is a 508-amino-acid chain: Photosystem II CP47 reaction center protein (508 aa).

The next 6 membrane-spanning stretches (helical) occupy residues Ser21–Ser36, Ile101–Trp115, Gly140–Phe156, Ile203–Ser218, Val237–Val252, and Ser457–Arg472.

It belongs to the PsbB/PsbC family. PsbB subfamily. As to quaternary structure, PSII is composed of 1 copy each of membrane proteins PsbA, PsbB, PsbC, PsbD, PsbE, PsbF, PsbH, PsbI, PsbJ, PsbK, PsbL, PsbM, PsbT, PsbX, PsbY, PsbZ, Psb30/Ycf12, at least 3 peripheral proteins of the oxygen-evolving complex and a large number of cofactors. It forms dimeric complexes. Binds multiple chlorophylls. PSII binds additional chlorophylls, carotenoids and specific lipids. is required as a cofactor.

Its subcellular location is the plastid. The protein resides in the chloroplast thylakoid membrane. One of the components of the core complex of photosystem II (PSII). It binds chlorophyll and helps catalyze the primary light-induced photochemical processes of PSII. PSII is a light-driven water:plastoquinone oxidoreductase, using light energy to abstract electrons from H(2)O, generating O(2) and a proton gradient subsequently used for ATP formation. In Gossypium hirsutum (Upland cotton), this protein is Photosystem II CP47 reaction center protein.